The following is a 63-amino-acid chain: Large ribosomal subunit protein eL24 (63 aa).

Cysteine 7, cysteine 10, cysteine 33, and cysteine 37 together coordinate Zn(2+). Residues 7-37 form a C4-type zinc finger; that stretch reads CSFCGGSIEPGTGLMYVLRNGQILWFCSSKC.

This sequence belongs to the eukaryotic ribosomal protein eL24 family. Part of the 50S ribosomal subunit. Forms a cluster with proteins L3 and L14. It depends on Zn(2+) as a cofactor.

Binds to the 23S rRNA. The sequence is that of Large ribosomal subunit protein eL24 from Aeropyrum pernix (strain ATCC 700893 / DSM 11879 / JCM 9820 / NBRC 100138 / K1).